Reading from the N-terminus, the 437-residue chain is Repulsive guidance molecule B (437 aa).

Positions 1–45 (MGLRAAPSSAAAAAAEVEQRRSPGLCPPPLELLLLLLFSLGLLHA) are cleaved as a signal peptide. N-linked (GlcNAc...) asparagine glycosylation is present at Asn120. The span at 121 to 133 (CSKDGPTSSTNPE) shows a compositional bias: polar residues. Residues 121-153 (CSKDGPTSSTNPEVTHDPCNYHSHAGAREHRRG) form a disordered region. 2 cysteine pairs are disulfide-bonded: Cys139–Cys226 and Cys163–Cys312. The N-linked (GlcNAc...) asparagine glycan is linked to Asn383. Residue Asn413 is the site of GPI-anchor amidated asparagine attachment. A propeptide spans 414-437 (GTPRGGSDLSVSLGLTCLILIVFL) (removed in mature form).

It belongs to the repulsive guidance molecule (RGM) family. As to quaternary structure, homooligomer. Interacts with DRGX. Interacts with BMP2 and BMP4. Interacts with the BMP type I receptors ACVR1, BMPR1A and BMPR1B and with the BMP type II receptor ACVR2B. The functional complex with its receptor NEO1/neogenin appears to be a heterotetramer with a 2:2 stoichiometry, RGM molecules acting as staples that bring two NEO1 receptors together without interacting themselves, this arrangement leads to activation of downstream signaling via RhoA. Post-translationally, GPI-anchored. Autocatalytically cleaved at low pH; the two chains remain linked via two disulfide bonds.

The protein resides in the cell membrane. The protein localises to the membrane raft. Its function is as follows. Member of the repulsive guidance molecule (RGM) family that contributes to the patterning of the developing nervous system. Acts as a bone morphogenetic protein (BMP) coreceptor that potentiates BMP signaling. Promotes neuronal adhesion. May inhibit neurite outgrowth. In Homo sapiens (Human), this protein is Repulsive guidance molecule B.